A 505-amino-acid chain; its full sequence is Phase 1 flagellin (505 aa).

The protein belongs to the bacterial flagellin family.

Its subcellular location is the secreted. It localises to the bacterial flagellum. Functionally, flagellin is the subunit protein which polymerizes to form the filaments of bacterial flagella. The chain is Phase 1 flagellin (fliC) from Salmonella naestved.